The chain runs to 164 residues: Cytochrome c-type biogenesis protein CcmE (164 aa).

At 1-8 the chain is on the cytoplasmic side; the sequence is MNPRRQKR. The helical; Signal-anchor for type II membrane protein transmembrane segment at 9–29 threads the bilayer; sequence LIVISAIVLVIGAAIGLMLYA. Residues 30 to 164 are Periplasmic-facing; that stretch reads LSQNIDLFYT…QAYSTPKVSG (135 aa). Heme-binding residues include histidine 132 and tyrosine 136.

This sequence belongs to the CcmE/CycJ family.

Its subcellular location is the cell inner membrane. Its function is as follows. Heme chaperone required for the biogenesis of c-type cytochromes. Transiently binds heme delivered by CcmC and transfers the heme to apo-cytochromes in a process facilitated by CcmF and CcmH. This Pseudoalteromonas atlantica (strain T6c / ATCC BAA-1087) protein is Cytochrome c-type biogenesis protein CcmE.